Reading from the N-terminus, the 104-residue chain is Translation initiation factor 1A (104 aa).

The span at 1 to 14 shows a compositional bias: low complexity; the sequence is MRGQQAPPQQPTRV. The disordered stretch occupies residues 1–20; sequence MRGQQAPPQQPTRVRTPREN. Residues 12–87 form the S1-like domain; it reads TRVRTPRENE…EKCDVIWRYT (76 aa).

It belongs to the eIF-1A family.

Its function is as follows. Seems to be required for maximal rate of protein biosynthesis. Enhances ribosome dissociation into subunits and stabilizes the binding of the initiator Met-tRNA(I) to 40 S ribosomal subunits. The sequence is that of Translation initiation factor 1A (eIF1A) from Methanococcus maripaludis (strain C6 / ATCC BAA-1332).